Consider the following 154-residue polypeptide: Superoxide dismutase [Cu-Zn] (154 aa).

His-47, His-49, and His-64 together coordinate Cu cation. An intrachain disulfide couples Cys-58 to Cys-147. 4 residues coordinate Zn(2+): His-64, His-72, His-81, and Asp-84. Residue His-121 participates in Cu cation binding. Positions 124-137 (TDDLGKGENEESKK) are enriched in basic and acidic residues. Residues 124–144 (TDDLGKGENEESKKTGNAGTR) form a disordered region. A substrate-binding site is contributed by Arg-144.

Belongs to the Cu-Zn superoxide dismutase family. As to quaternary structure, homodimer. Cu cation serves as cofactor. Requires Zn(2+) as cofactor.

Its subcellular location is the cytoplasm. It catalyses the reaction 2 superoxide + 2 H(+) = H2O2 + O2. Functionally, destroys radicals which are normally produced within the cells and which are toxic to biological systems. The protein is Superoxide dismutase [Cu-Zn] (sod1) of Botryotinia fuckeliana (Noble rot fungus).